Here is a 1128-residue protein sequence, read N- to C-terminus: GTPase-activating protein BEM3 (1128 aa).

The tract at residues 194–241 (SSPTKIHSEQLASPAASVTYTTSRITIKSPNKGSKSPLQERLRSPQNP) is disordered. Over residues 209–230 (ASVTYTTSRITIKSPNKGSKSP) the composition is skewed to polar residues. S254 carries the post-translational modification Phosphoserine. Disordered stretches follow at residues 345–391 (EDLV…TPLS) and 418–486 (PVLT…RPHA). Positions 366–375 (LPPPPAPPTF) are enriched in pro residues. Polar residues-rich tracts occupy residues 382–391 (GNIKNSTPLS) and 420–478 (LTSS…QGSL). The PH domain occupies 634 to 741 (DNVKDGSLLL…WLSAFSDYID (108 aa)). Disordered regions lie at residues 746–777 (LSLS…NATI) and 796–838 (NNNI…DSRR). The segment covering 752 to 764 (RNANDTDSASHLS) has biased composition (polar residues). A compositionally biased stretch (low complexity) spans 796-815 (NNNISNSSNNIANSDGIDSN). Over residues 816–829 (PSSHSNFLASSSGN) the composition is skewed to polar residues. A Rho-GAP domain is found at 913-1128 (LRLSSHKYQN…EKVDIHIPQV (216 aa)).

Its subcellular location is the cytoplasm. Functionally, GTPase-activating protein (GAP) for CDC42 and less efficiently for RHO1. Negative regulator of the pheromone-response pathway through the STE20 protein kinase. The sequence is that of GTPase-activating protein BEM3 (BEM3) from Saccharomyces cerevisiae (strain ATCC 204508 / S288c) (Baker's yeast).